A 342-amino-acid polypeptide reads, in one-letter code: Erlin-1 (342 aa).

The Cytoplasmic portion of the chain corresponds to M1–A6. The chain crosses the membrane as a helical span at residues V7 to I23. Residues H24 to H342 lie on the Lumenal side of the membrane. The N-linked (GlcNAc...) asparagine glycan is linked to N106. Positions S308–H342 are disordered.

It belongs to the band 7/mec-2 family.

Its subcellular location is the endoplasmic reticulum membrane. In terms of biological role, mediates the endoplasmic reticulum-associated degradation (ERAD) of inositol 1,4,5-trisphosphate receptors (IP3Rs). Involved in regulation of cellular cholesterol homeostasis by regulation the SREBP signaling pathway. Binds cholesterol and may promote ER retention of the SCAP-SREBF complex. The protein is Erlin-1 of Danio rerio (Zebrafish).